A 423-amino-acid polypeptide reads, in one-letter code: Enolase (423 aa).

Gln162 is a (2R)-2-phosphoglycerate binding site. The active-site Proton donor is Glu204. Positions 241, 284, and 311 each coordinate Mg(2+). Positions 336, 365, 366, and 387 each coordinate (2R)-2-phosphoglycerate. Lys336 (proton acceptor) is an active-site residue.

This sequence belongs to the enolase family. It depends on Mg(2+) as a cofactor.

It localises to the cytoplasm. Its subcellular location is the secreted. It is found in the cell surface. It catalyses the reaction (2R)-2-phosphoglycerate = phosphoenolpyruvate + H2O. Its pathway is carbohydrate degradation; glycolysis; pyruvate from D-glyceraldehyde 3-phosphate: step 4/5. Functionally, catalyzes the reversible conversion of 2-phosphoglycerate (2-PG) into phosphoenolpyruvate (PEP). It is essential for the degradation of carbohydrates via glycolysis. The sequence is that of Enolase from Bartonella bacilliformis (strain ATCC 35685 / KC583 / Herrer 020/F12,63).